The primary structure comprises 1281 residues: Dynactin subunit 1 (1281 aa).

A disordered region spans residues 1 to 26 (MAQSRRHMSSRTPSGSRMSTEASARP). Polar residues predominate over residues 10 to 22 (SRTPSGSRMSTEA). Residues 48–90 (GATLFATGKWVGVILDEAKGKNDGTVQGRKYFTCDEGHGIFVR) form the CAP-Gly domain. A disordered region spans residues 100–221 (GADTTSPETP…SPSKEEEGLR (122 aa)). Over residues 102-114 (DTTSPETPDSSAS) the composition is skewed to polar residues. Phosphothreonine is present on residues T108, T145, T146, and T147. Basic residues predominate over residues 129-152 (SKLRGLKPKKAPTARKTTTRRPKP). The segment covering 161-205 (AGPSSSLGPSGSASAGELSSSEPSTPAQTPLAAPIIPTPALTSPG) has biased composition (low complexity). S179 is modified (phosphoserine; by PLK1). Position 212 is a phosphoserine; by CDK1 (S212). Coiled-coil stretches lie at residues 214–547 (SKEE…RQQQ), 943–1049 (LKLE…EGLR), and 1185–1214 (SAQL…KETV). The interaction with HPS6 stretch occupies residues 911-1281 (EYDAERPPSK…LHQLHSRLIS (371 aa)).

It belongs to the dynactin 150 kDa subunit family. Monomer and homodimer. Subunit of dynactin, a multiprotein complex part of a tripartite complex with dynein and a adapter, such as BICDL1, BICD2 or HOOK3. The dynactin complex is built around ACTR1A/ACTB filament and consists of an actin-related filament composed of a shoulder domain, a pointed end and a barbed end. Its length is defined by its flexible shoulder domain. The soulder is composed of 2 DCTN1 subunits, 4 DCTN2 and 2 DCTN3. DCTN1/p150(glued) binds directly to microtubules and to cytoplasmic dynein. The 4 DCNT2 (via N-terminus) bind the ACTR1A filament and act as molecular rulers to determine the length. The pointed end is important for binding dynein-dynactin cargo adapters. Consists of 4 subunits: ACTR10, DCNT4, DCTN5 and DCTN6. The barbed end is composed of a CAPZA1:CAPZB heterodimers, which binds ACTR1A/ACTB filament and dynactin and stabilizes dynactin. Interacts with the C-terminus of MAPRE1, MAPRE2 and MAPRE3. Interacts with FBXL5. Interacts with ECPAS. Interacts with CLIP1. Interacts with CLN3 and DYNAP. Interacts with MISP; this interaction regulates its distribution at the cell cortex. Interacts with CEP131. Interacts with CEP126. Interacts with dynein intermediate chain and dynein heavy chain. Interacts with PLK1 (via POLO-box domain). Interacts with TBCB and PARD6A. Binds preferentially to tyrosinated microtubules than to detyrosinated microtubules. Interacts with KIF3A. Interacts with HPS6. Interacts with SNX6. Interacts with BICD2. Interacts with DST (isoform 1). Identified in a complex with MREG and RILP. Interacts with BCCIP. Interacts with DCDC1. Interacts with AKNA. Interacts with DYNC1I2. Interacts with RUFY3 and RUFY4. Ubiquitinated by a SCF complex containing FBXL5, leading to its degradation by the proteasome. In terms of processing, phosphorylation by SLK at Thr-145, Thr-146 and Thr-147 targets DCTN1 to the centrosome. It is uncertain if SLK phosphorylates all three threonines or one or two of them. PLK1-mediated phosphorylation at Ser-179 is essential for its localization in the nuclear envelope and promotes its dissociation from microtubules during early mitosis and positively regulates nuclear envelope breakdown during prophase.

Its subcellular location is the cytoplasm. The protein resides in the cytoskeleton. It is found in the microtubule organizing center. It localises to the centrosome. The protein localises to the centriole. Its subcellular location is the spindle. The protein resides in the nucleus envelope. It is found in the cell cortex. Functionally, part of the dynactin complex that activates the molecular motor dynein for ultra-processive transport along microtubules. Plays a key role in dynein-mediated retrograde transport of vesicles and organelles along microtubules by recruiting and tethering dynein to microtubules. Binds to both dynein and microtubules providing a link between specific cargos, microtubules and dynein. Essential for targeting dynein to microtubule plus ends, recruiting dynein to membranous cargos and enhancing dynein processivity (the ability to move along a microtubule for a long distance without falling off the track). Can also act as a brake to slow the dynein motor during motility along the microtubule. Can regulate microtubule stability by promoting microtubule formation, nucleation and polymerization and by inhibiting microtubule catastrophe in neurons. Inhibits microtubule catastrophe by binding both to microtubules and to tubulin, leading to enhanced microtubule stability along the axon. Plays a role in metaphase spindle orientation. Plays a role in centriole cohesion and subdistal appendage organization and function. Its recruitment to the centriole in a KIF3A-dependent manner is essential for the maintenance of centriole cohesion and the formation of subdistal appendage. Also required for microtubule anchoring at the mother centriole. Plays a role in primary cilia formation. This Mus musculus (Mouse) protein is Dynactin subunit 1 (Dctn1).